Here is a 199-residue protein sequence, read N- to C-terminus: Potassium-transporting ATPase KdpC subunit (199 aa).

A helical membrane pass occupies residues 7–27 (PAIVLLLALTLLTGLAYPLAM). The segment at 67–86 (HGRPSATTAADPQDSSKTVP) is disordered. Positions 71–84 (SATTAADPQDSSKT) are enriched in polar residues.

Belongs to the KdpC family. In terms of assembly, the system is composed of three essential subunits: KdpA, KdpB and KdpC.

It localises to the cell inner membrane. Part of the high-affinity ATP-driven potassium transport (or Kdp) system, which catalyzes the hydrolysis of ATP coupled with the electrogenic transport of potassium into the cytoplasm. This subunit acts as a catalytic chaperone that increases the ATP-binding affinity of the ATP-hydrolyzing subunit KdpB by the formation of a transient KdpB/KdpC/ATP ternary complex. The sequence is that of Potassium-transporting ATPase KdpC subunit from Rhodopseudomonas palustris (strain BisB18).